The chain runs to 77 residues: Probable Fe(2+)-trafficking protein (77 aa).

This sequence belongs to the Fe(2+)-trafficking protein family. In terms of assembly, monomer.

Its function is as follows. Could be a mediator in iron transactions between iron acquisition and iron-requiring processes, such as synthesis and/or repair of Fe-S clusters in biosynthetic enzymes. This Buchnera aphidicola subsp. Acyrthosiphon pisum (strain APS) (Acyrthosiphon pisum symbiotic bacterium) protein is Probable Fe(2+)-trafficking protein.